The following is a 136-amino-acid chain: Probable 5-hydroxyisourate hydrolase ZK697.8 (136 aa).

Positions 1-19 (MIKFLLFLAIAAATVISNA) are cleaved as a signal peptide. The substrate site is built by histidine 31, arginine 69, and tyrosine 133.

This sequence belongs to the transthyretin family. 5-hydroxyisourate hydrolase subfamily. In terms of assembly, homotetramer.

The enzyme catalyses 5-hydroxyisourate + H2O = 5-hydroxy-2-oxo-4-ureido-2,5-dihydro-1H-imidazole-5-carboxylate + H(+). Catalyzes the hydrolysis of 5-hydroxyisourate (HIU) to 2-oxo-4-hydroxy-4-carboxy-5-ureidoimidazoline (OHCU). The chain is Probable 5-hydroxyisourate hydrolase ZK697.8 from Caenorhabditis elegans.